Here is a 195-residue protein sequence, read N- to C-terminus: Small ribosomal subunit protein uS4c (195 aa).

The S4 RNA-binding domain maps to Met82–Asn143.

This sequence belongs to the universal ribosomal protein uS4 family. In terms of assembly, part of the 30S ribosomal subunit. Contacts protein S5. The interaction surface between S4 and S5 is involved in control of translational fidelity.

The protein resides in the plastid. It localises to the chloroplast. In terms of biological role, one of the primary rRNA binding proteins, it binds directly to 16S rRNA where it nucleates assembly of the body of the 30S subunit. With S5 and S12 plays an important role in translational accuracy. This is Small ribosomal subunit protein uS4c (rps4) from Pillansia templemannii.